The sequence spans 205 residues: Large ribosomal subunit protein uL3 (205 aa).

It belongs to the universal ribosomal protein uL3 family. Part of the 50S ribosomal subunit. Forms a cluster with proteins L14 and L19.

Functionally, one of the primary rRNA binding proteins, it binds directly near the 3'-end of the 23S rRNA, where it nucleates assembly of the 50S subunit. This chain is Large ribosomal subunit protein uL3, found in Thermosipho melanesiensis (strain DSM 12029 / CIP 104789 / BI429).